Consider the following 461-residue polypeptide: tRNA modification GTPase MnmE (461 aa).

(6S)-5-formyl-5,6,7,8-tetrahydrofolate is bound by residues Arg-23, Glu-88, and Arg-127. One can recognise a TrmE-type G domain in the interval 223-383; it reads GLNTVIVGKP…LKECIKNLFF (161 aa). Asn-233 provides a ligand contact to K(+). GTP contacts are provided by residues 233 to 238, 252 to 258, and 277 to 280; these read NVGKSS, TEIPGTT, and DTAG. Ser-237 serves as a coordination point for Mg(2+). Residues Thr-252, Ile-254, and Thr-257 each coordinate K(+). Thr-258 contributes to the Mg(2+) binding site. A (6S)-5-formyl-5,6,7,8-tetrahydrofolate-binding site is contributed by Lys-461.

Belongs to the TRAFAC class TrmE-Era-EngA-EngB-Septin-like GTPase superfamily. TrmE GTPase family. As to quaternary structure, homodimer. Heterotetramer of two MnmE and two MnmG subunits. It depends on K(+) as a cofactor.

It is found in the cytoplasm. Its function is as follows. Exhibits a very high intrinsic GTPase hydrolysis rate. Involved in the addition of a carboxymethylaminomethyl (cmnm) group at the wobble position (U34) of certain tRNAs, forming tRNA-cmnm(5)s(2)U34. This is tRNA modification GTPase MnmE from Clostridium botulinum (strain Okra / Type B1).